A 335-amino-acid polypeptide reads, in one-letter code: Atypical chemokine receptor 1 (335 aa).

The Extracellular segment spans residues 1 to 62 (MGNCLHPAEL…CNLLDDSALP (62 aa)). N-linked (GlcNAc...) asparagine glycosylation is found at Asn-16, Asn-26, and Asn-32. Intrachain disulfides connect Cys-50-Cys-275 and Cys-128-Cys-194. The helical transmembrane segment at 63–83 (FFILVSVLGILASGTVLFMFF) threads the bilayer. The Cytoplasmic segment spans residues 84–94 (RPLFHWQLCPG). Residues 95–115 (WPVLAQLAVGSALFSIVVPIL) form a helical membrane-spanning segment. Residues 116-128 (APGLGNTRSSALC) are Extracellular-facing. Residues 129–152 (SLGYCVWYGSAFAQALLLGCHASL) form a helical membrane-spanning segment. The Cytoplasmic portion of the chain corresponds to 153-165 (GPKLGAGQVPGLT). A helical membrane pass occupies residues 166–186 (LGLSVGLWGVAALLTLPITLA). At 187 to 206 (SGASGGLCTPAYSMELKALQ) the chain is on the extracellular side. The helical transmembrane segment at 207–227 (ATHAVACLAVFVLLPLGLFGA) threads the bilayer. Topologically, residues 228 to 243 (KGLKKALGMGPGPWMN) are cytoplasmic. The chain crosses the membrane as a helical span at residues 244-264 (ILWAWFIFWWPHGVVLGLDFL). Residues 265-286 (VRSKLLLLSTCLAQQALDLLLN) are Extracellular-facing. Residues 287–307 (LAEALAILHCVATPLLLALFC) traverse the membrane as a helical segment. The Cytoplasmic segment spans residues 308-335 (HQATRTLLPSLPLPEGWSSHLDTLGSES).

This sequence belongs to the G-protein coupled receptor 1 family. Atypical chemokine receptor subfamily. As to quaternary structure, (Microbial infection) Interacts (via N-terminal extracellular domain) with Plasmodium knowlesi Duffy receptor alpha form (DBPalpha) (via region II).

Its subcellular location is the early endosome. The protein resides in the recycling endosome. The protein localises to the membrane. In terms of biological role, atypical chemokine receptor that controls chemokine levels and localization via high-affinity chemokine binding that is uncoupled from classic ligand-driven signal transduction cascades, resulting instead in chemokine sequestration, degradation, or transcytosis. Also known as interceptor (internalizing receptor) or chemokine-scavenging receptor or chemokine decoy receptor. Has a promiscuous chemokine-binding profile, interacting with inflammatory chemokines of both the CXC and the CC subfamilies but not with homeostatic chemokines. Acts as a receptor for chemokines including CCL2, CCL5, CCL7, CCL11, CCL13, CCL14, CCL17, CXCL5, CXCL6, IL8/CXCL8, CXCL11, GRO, RANTES, MCP-1 and TARC. May regulate chemokine bioavailability and, consequently, leukocyte recruitment through two distinct mechanisms: when expressed in endothelial cells, it sustains the abluminal to luminal transcytosis of tissue-derived chemokines and their subsequent presentation to circulating leukocytes; when expressed in erythrocytes, serves as blood reservoir of cognate chemokines but also as a chemokine sink, buffering potential surges in plasma chemokine levels. Functionally, (Microbial infection) Acts as a receptor for the malaria parasite Plasmodium knowlesi. This chain is Atypical chemokine receptor 1 (ACKR1), found in Macaca mulatta (Rhesus macaque).